Here is a 362-residue protein sequence, read N- to C-terminus: MFSSVAHLARANPFNTPHLQLVHDGLGDLRSSSPGPTGQPRRPRNLAAAAVEEQYSCDYGSGRFFILCGLGGIISCGTTHTALVPLDLVKCRMQVDPQKYKGIFNGFSVTLKEDGVRGLAKGWAPTFLGYSMQGLCKFGFYEVFKVLYSNMLGEENTYLWRTSLYLAASASAEFFADIALAPMEAAKVRIQTQPGYANTLRDAAPKMYKEEGLKAFYKGVAPLWMRQIPYTMMKFACFERTVEALYKFVVPKPRSECSKPEQLVVTFVAGYIAGVFCAIVSHPADSVVSVLNKEKGSSASLVLKRLGFKGVWKGLFARIIMIGTLTALQWFIYDSVKVYFRLPRPPPPEMPESLKKKLGLTQ.

Residues 1-49 (MFSSVAHLARANPFNTPHLQLVHDGLGDLRSSSPGPTGQPRRPRNLAAA) constitute a mitochondrion transit peptide. Residues 50-63 (AVEEQYSCDYGSGR) are Mitochondrial intermembrane-facing. Solcar repeat units lie at residues 63-147 (RFFI…FKVL), 160-244 (WRTS…TVEA), and 261-339 (EQLV…VKVY). A helical membrane pass occupies residues 64-86 (FFILCGLGGIISCGTTHTALVPL). The Mitochondrial matrix segment spans residues 87-121 (DLVKCRMQVDPQKYKGIFNGFSVTLKEDGVRGLAK). An N6-acetyllysine modification is found at K99. K112 carries the N6-methyllysine modification. Residues 122–141 (GWAPTFLGYSMQGLCKFGFY) traverse the membrane as a helical segment. Residues 142-161 (EVFKVLYSNMLGEENTYLWR) lie on the Mitochondrial intermembrane side of the membrane. A helical transmembrane segment spans residues 162–183 (TSLYLAASASAEFFADIALAPM). Over 184-218 (EAAKVRIQTQPGYANTLRDAAPKMYKEEGLKAFYK) the chain is Mitochondrial matrix. Phosphotyrosine is present on Y196. Residue K209 is modified to N6-acetyllysine. A helical membrane pass occupies residues 219–238 (GVAPLWMRQIPYTMMKFACF). The Mitochondrial intermembrane segment spans residues 239 to 261 (ERTVEALYKFVVPKPRSECSKPE). The chain crosses the membrane as a helical span at residues 262–284 (QLVVTFVAGYIAGVFCAIVSHPA). The Mitochondrial matrix portion of the chain corresponds to 285-314 (DSVVSVLNKEKGSSASLVLKRLGFKGVWKG). Residues 315-333 (LFARIIMIGTLTALQWFIY) form a helical membrane-spanning segment. The Mitochondrial intermembrane portion of the chain corresponds to 334–362 (DSVKVYFRLPRPPPPEMPESLKKKLGLTQ).

It belongs to the mitochondrial carrier (TC 2.A.29) family. As to quaternary structure, interacts with PPIF; the interaction is impaired by CsA.

Its subcellular location is the mitochondrion inner membrane. It catalyses the reaction phosphate(in) + H(+)(in) = phosphate(out) + H(+)(out). Inorganic ion transporter that transports phosphate or copper ions across the mitochondrial inner membrane into the matrix compartment. Mediates proton-coupled symport of phosphate ions necessary for mitochondrial oxidative phosphorylation of ADP to ATP. Transports copper ions probably in the form of anionic copper(I) complexes to maintain mitochondrial matrix copper pool and to supply copper for cytochrome C oxidase complex assembly. May also play a role in regulation of the mitochondrial permeability transition pore (mPTP). The sequence is that of Solute carrier family 25 member 3 from Homo sapiens (Human).